Reading from the N-terminus, the 192-residue chain is Imidazoleglycerol-phosphate dehydratase (192 aa).

This sequence belongs to the imidazoleglycerol-phosphate dehydratase family.

It is found in the cytoplasm. The enzyme catalyses D-erythro-1-(imidazol-4-yl)glycerol 3-phosphate = 3-(imidazol-4-yl)-2-oxopropyl phosphate + H2O. It participates in amino-acid biosynthesis; L-histidine biosynthesis; L-histidine from 5-phospho-alpha-D-ribose 1-diphosphate: step 6/9. In Clostridioides difficile (strain 630) (Peptoclostridium difficile), this protein is Imidazoleglycerol-phosphate dehydratase.